We begin with the raw amino-acid sequence, 290 residues long: 4-diphosphocytidyl-2-C-methyl-D-erythritol kinase (290 aa).

Residue lysine 10 is part of the active site. 95 to 105 (PVAAGLAGGSS) contacts ATP. Aspartate 137 is a catalytic residue.

Belongs to the GHMP kinase family. IspE subfamily.

It catalyses the reaction 4-CDP-2-C-methyl-D-erythritol + ATP = 4-CDP-2-C-methyl-D-erythritol 2-phosphate + ADP + H(+). Its pathway is isoprenoid biosynthesis; isopentenyl diphosphate biosynthesis via DXP pathway; isopentenyl diphosphate from 1-deoxy-D-xylulose 5-phosphate: step 3/6. Catalyzes the phosphorylation of the position 2 hydroxy group of 4-diphosphocytidyl-2C-methyl-D-erythritol. The sequence is that of 4-diphosphocytidyl-2-C-methyl-D-erythritol kinase from Geobacillus kaustophilus (strain HTA426).